The chain runs to 408 residues: MIERSNSTPSATPVRPPLAVDEEYNQAFRSKSFLDLWSHAHHHLTHTFSSFKLSTSTPCAGRGGAREDDFLHAGGDGGAADDSEQSCSYTVLDDFVLEPSPESLARGARLQQRRRRRPRRHRVETLLIEYFDVTEEACEACSALLAAIGAARRHHLTLRRLLLRLDGGDDDDAKDALARHVRLDNPLSPGSLSEFHDVHARCSPLASRLAAAQRRLRRLARALRIARGTAAAALVGACAAAIVAAVVLAAHALVGIGVAAAAFGATPAGAARWWARRAAEKVSSRHYARAGATLDAAARGAYIVGRDLDTVSRMVRRAHDELEHGRDVARIAMRGHGERPLLQEVAREEEECEEDLRAQLAELEEHVCLCLITINRTRRLVAHEMARGLPPPSPATVTTTSEERLTSS.

2 consecutive transmembrane segments (helical) span residues R224–A244 and A252–R272. The disordered stretch occupies residues M385 to S408.

This sequence belongs to the UPF0496 family.

It is found in the membrane. In Oryza sativa subsp. indica (Rice), this protein is Putative UPF0496 protein 2.